The primary structure comprises 499 residues: Calcium/calmodulin-dependent protein kinase type II subunit delta (499 aa).

Ala2 carries the N-acetylalanine modification. A Protein kinase domain is found at 14 to 272; that stretch reads YQLFEELGKG…ASEALKHPWI (259 aa). Residues 20–28 and Lys43 contribute to the ATP site; that span reads LGKGAFSVV. Residue Asp136 is the Proton acceptor of the active site. Residues 283-292 are autoinhibitory domain; it reads HRQETVDCLK. The residue at position 287 (Thr287) is a Phosphothreonine; by autocatalysis. The segment at 291–301 is calmodulin-binding; that stretch reads LKKFNARRKLK. 2 positions are modified to phosphothreonine; by autocatalysis: Thr306 and Thr307. Ser315 is subject to Phosphoserine. Lys318 is modified (N6-acetyllysine). 2 positions are modified to phosphoserine: Ser319 and Ser330. A Phosphothreonine modification is found at Thr331. Position 333 is a phosphoserine (Ser333). Thr336 and Thr337 each carry phosphothreonine. Ser404, Ser490, and Ser494 each carry phosphoserine.

It belongs to the protein kinase superfamily. CAMK Ser/Thr protein kinase family. CaMK subfamily. As to quaternary structure, CAMK2 is composed of 4 different chains: alpha (CAMK2A), beta (CAMK2B), gamma (CAMK2G), and delta (CAMK2D). The different isoforms assemble into homo- or heteromultimeric holoenzymes composed of 12 subunits with two hexameric rings stacked one on top of the other. Interacts with RRAD and CACNB2. In terms of processing, autophosphorylation of Thr-287 following activation by Ca(2+)/calmodulin. Phosphorylation of Thr-287 locks the kinase into an activated state. As to expression, expressed in cardiac muscle and skeletal muscle. Isoform Delta 3, isoform Delta 2, isoform Delta 8 and isoform Delta 9 are expressed in cardiac muscle. Isoform Delta 11 is expressed in skeletal muscle.

It localises to the cell membrane. The protein resides in the sarcolemma. Its subcellular location is the sarcoplasmic reticulum membrane. The enzyme catalyses L-seryl-[protein] + ATP = O-phospho-L-seryl-[protein] + ADP + H(+). It carries out the reaction L-threonyl-[protein] + ATP = O-phospho-L-threonyl-[protein] + ADP + H(+). Its activity is regulated as follows. Activated by Ca(2+)/calmodulin. Binding of calmodulin results in conformational change that relieves intrasteric autoinhibition and allows autophosphorylation of Thr-287 which turns the kinase in a constitutively active form and confers to the kinase a Ca(2+)-independent activity. In terms of biological role, calcium/calmodulin-dependent protein kinase involved in the regulation of Ca(2+) homeostatis and excitation-contraction coupling (ECC) in heart by targeting ion channels, transporters and accessory proteins involved in Ca(2+) influx into the myocyte, Ca(2+) release from the sarcoplasmic reticulum (SR), SR Ca(2+) uptake and Na(+) and K(+) channel transport. Targets also transcription factors and signaling molecules to regulate heart function. In its activated form, is involved in the pathogenesis of dilated cardiomyopathy and heart failure. Contributes to cardiac decompensation and heart failure by regulating SR Ca(2+) release via direct phosphorylation of RYR2 Ca(2+) channel on 'Ser-2808'. In the nucleus, phosphorylates the MEF2 repressor HDAC4, promoting its nuclear export and binding to 14-3-3 protein, and expression of MEF2 and genes involved in the hypertrophic program. Is essential for left ventricular remodeling responses to myocardial infarction. In pathological myocardial remodeling acts downstream of the beta adrenergic receptor signaling cascade to regulate key proteins involved in ECC. Regulates Ca(2+) influx to myocytes by binding and phosphorylating the L-type Ca(2+) channel subunit beta-2 CACNB2. In addition to Ca(2+) channels, can target and regulate the cardiac sarcolemmal Na(+) channel Nav1.5/SCN5A and the K+ channel Kv4.3/KCND3, which contribute to arrhythmogenesis in heart failure. Phosphorylates phospholamban (PLN/PLB), an endogenous inhibitor of SERCA2A/ATP2A2, contributing to the enhancement of SR Ca(2+) uptake that may be important in frequency-dependent acceleration of relaxation (FDAR) and maintenance of contractile function during acidosis. May participate in the modulation of skeletal muscle function in response to exercise, by regulating SR Ca(2+) transport through phosphorylation of PLN/PLB and triadin, a ryanodine receptor-coupling factor. In response to interferon-gamma (IFN-gamma) stimulation, catalyzes phosphorylation of STAT1, stimulating the JAK-STAT signaling pathway. In Homo sapiens (Human), this protein is Calcium/calmodulin-dependent protein kinase type II subunit delta (CAMK2D).